The primary structure comprises 233 residues: 5'-methylthioadenosine/S-adenosylhomocysteine nucleosidase (233 aa).

The Proton acceptor role is filled by E12. Substrate contacts are provided by residues G78, I156, and 177–178; that span reads ME. D201 (proton donor) is an active-site residue.

It belongs to the PNP/UDP phosphorylase family. MtnN subfamily.

It carries out the reaction S-adenosyl-L-homocysteine + H2O = S-(5-deoxy-D-ribos-5-yl)-L-homocysteine + adenine. The catalysed reaction is S-methyl-5'-thioadenosine + H2O = 5-(methylsulfanyl)-D-ribose + adenine. It catalyses the reaction 5'-deoxyadenosine + H2O = 5-deoxy-D-ribose + adenine. It functions in the pathway amino-acid biosynthesis; L-methionine biosynthesis via salvage pathway; S-methyl-5-thio-alpha-D-ribose 1-phosphate from S-methyl-5'-thioadenosine (hydrolase route): step 1/2. In terms of biological role, catalyzes the irreversible cleavage of the glycosidic bond in both 5'-methylthioadenosine (MTA) and S-adenosylhomocysteine (SAH/AdoHcy) to adenine and the corresponding thioribose, 5'-methylthioribose and S-ribosylhomocysteine, respectively. Also cleaves 5'-deoxyadenosine, a toxic by-product of radical S-adenosylmethionine (SAM) enzymes, into 5-deoxyribose and adenine. The polypeptide is 5'-methylthioadenosine/S-adenosylhomocysteine nucleosidase (Listeria monocytogenes serovar 1/2a (strain ATCC BAA-679 / EGD-e)).